The following is a 470-amino-acid chain: Nuclear receptor ROR-beta (470 aa).

The segment at residues 18–93 (VIPCKICGDK…LGMSRDAVKF (76 aa)) is a DNA-binding region (nuclear receptor). NR C4-type zinc fingers lie at residues 21 to 41 (CKICGDKSSGIHYGVITCEGC) and 57 to 81 (CPRQRNCLIDRTNRNRCQHCRLQKC). A compositionally biased stretch (basic and acidic residues) spans 104–117 (LYAEVQKHQQRLQE). The segment at 104–127 (LYAEVQKHQQRLQEQRQQQSGEAE) is disordered. Positions 222–460 (EIDRIAQNII…TLFPPLYKEL (239 aa)) constitute an NR LBD domain. The short motif at 456–461 (LYKELF) is the AF-2 element.

It belongs to the nuclear hormone receptor family. NR1 subfamily. Monomer. Interacts with CRX. Isoform 2 expressed with circadian rhythm in eye and pineal gland. Isoform 1 expressed in retina cortex, thalamus, and hypothalamus.

It is found in the nucleus. It localises to the nucleoplasm. Nuclear receptor that binds DNA as a monomer to ROR response elements (RORE) containing a single core motif half-site 5'-AGGTCA-3' preceded by a short A-T-rich sequence. Considered to have intrinsic transcriptional activity, have some natural ligands such as all-trans retinoic acid (ATRA) and other retinoids which act as inverse agonists repressing the transcriptional activity. Required for normal postnatal development of rod and cone photoreceptor cells. Modulates rod photoreceptors differentiation at least by inducing the transcription factor NRL-mediated pathway. In cone photoreceptor cells, regulates transcription of OPN1SW. Involved in the regulation of the period length and stability of the circadian rhythm. May control cytoarchitectural patterning of neocortical neurons during development. May act in a dose-dependent manner to regulate barrel formation upon innervation of layer IV neurons by thalamocortical axons. May play a role in the suppression of osteoblastic differentiation through the inhibition of RUNX2 transcriptional activity. In terms of biological role, critical for hindlimb motor control and for the differentiation of amacrine and horizontal cells in the retina. Regulates the expression of PTF1A synergistically with FOXN4. The polypeptide is Nuclear receptor ROR-beta (Rorb) (Rattus norvegicus (Rat)).